The chain runs to 365 residues: Eukaryotic translation initiation factor 3 subunit H (365 aa).

Residues 15–166 (ILLDSLVVMK…IRAWRLSTAA (152 aa)) form the MPN domain. The interval 276 to 295 (KRQQENESRLARGDPPLPMD) is disordered. The span at 277–287 (RQQENESRLAR) shows a compositional bias: basic and acidic residues.

The protein belongs to the eIF-3 subunit H family. Component of the eukaryotic translation initiation factor 3 (eIF-3) complex.

Its subcellular location is the cytoplasm. Component of the eukaryotic translation initiation factor 3 (eIF-3) complex, which is involved in protein synthesis of a specialized repertoire of mRNAs and, together with other initiation factors, stimulates binding of mRNA and methionyl-tRNAi to the 40S ribosome. The eIF-3 complex specifically targets and initiates translation of a subset of mRNAs involved in cell proliferation. The sequence is that of Eukaryotic translation initiation factor 3 subunit H from Caenorhabditis briggsae.